Consider the following 347-residue polypeptide: Protein RecA (347 aa).

67 to 74 (GPESSGKT) is a binding site for ATP.

Belongs to the RecA family.

It is found in the cytoplasm. Functionally, can catalyze the hydrolysis of ATP in the presence of single-stranded DNA, the ATP-dependent uptake of single-stranded DNA by duplex DNA, and the ATP-dependent hybridization of homologous single-stranded DNAs. It interacts with LexA causing its activation and leading to its autocatalytic cleavage. This chain is Protein RecA, found in Helicobacter pylori (strain Shi470).